The following is a 74-amino-acid chain: Omwaprin-b (74 aa).

The first 24 residues, 1–24, serve as a signal peptide directing secretion; the sequence is MSSGGLLLLLGLLTLWEVLTPVSS. The WAP domain maps to 27–71; that stretch reads RPKKPGLCPPRPQKPCVKECKNDWSCPGQQKCCNYGCIDECRDPI. Cystine bridges form between cysteine 34–cysteine 59, cysteine 42–cysteine 63, cysteine 46–cysteine 58, and cysteine 52–cysteine 67.

Belongs to the venom waprin family. In terms of tissue distribution, expressed by the venom gland.

The protein resides in the secreted. Damages membranes of susceptible bacteria. Has antibacterial activity against the Gram-positive bacteria B.megaterium and S.warneri. After 45 minutes of treatment with this protein, B.megaterium have no visible pili and are smooth. Has no antibacterial activity against the Gram-positive bacteria B.thuringiensis, S.aureus, S.clavuligerus and B. anthracis, or the Gram-negative bacteria E.coli and A.tumefaciens. Has no hemolytic activity. Does not inhibit the proteinases elastase and cathepsin G. Is not toxic to mice. The chain is Omwaprin-b from Oxyuranus microlepidotus (Inland taipan).